A 64-amino-acid chain; its full sequence is Large ribosomal subunit protein bL32 (64 aa).

The tract at residues methionine 1–glutamate 35 is disordered.

The protein belongs to the bacterial ribosomal protein bL32 family.

In Xanthomonas campestris pv. campestris (strain 8004), this protein is Large ribosomal subunit protein bL32.